We begin with the raw amino-acid sequence, 294 residues long: Indole-3-glycerol phosphate synthase (294 aa).

Belongs to the TrpC family.

The catalysed reaction is 1-(2-carboxyphenylamino)-1-deoxy-D-ribulose 5-phosphate + H(+) = (1S,2R)-1-C-(indol-3-yl)glycerol 3-phosphate + CO2 + H2O. It functions in the pathway amino-acid biosynthesis; L-tryptophan biosynthesis; L-tryptophan from chorismate: step 4/5. This chain is Indole-3-glycerol phosphate synthase, found in Parasynechococcus marenigrum (strain WH8102).